A 134-amino-acid polypeptide reads, in one-letter code: Transcription antitermination protein NusB (134 aa).

This sequence belongs to the NusB family.

Its function is as follows. Involved in transcription antitermination. Required for transcription of ribosomal RNA (rRNA) genes. Binds specifically to the boxA antiterminator sequence of the ribosomal RNA (rrn) operons. The protein is Transcription antitermination protein NusB of Shewanella sediminis (strain HAW-EB3).